Consider the following 437-residue polypeptide: Ribosomal protein uS12 methylthiotransferase RimO (437 aa).

Residues 9 to 128 (NKINVITLGC…LLKALGADYK (120 aa)) enclose the MTTase N-terminal domain. Residues Cys-18, Cys-57, Cys-91, Cys-152, Cys-156, and Cys-159 each coordinate [4Fe-4S] cluster. Residues 138-368 (TTPKNYAYLK…MELQSQISWD (231 aa)) enclose the Radical SAM core domain. The region spanning 371–437 (QEKVGQVFRC…TEFDLYGEPA (67 aa)) is the TRAM domain.

Belongs to the methylthiotransferase family. RimO subfamily. The cofactor is [4Fe-4S] cluster.

The protein localises to the cytoplasm. The enzyme catalyses L-aspartate(89)-[ribosomal protein uS12]-hydrogen + (sulfur carrier)-SH + AH2 + 2 S-adenosyl-L-methionine = 3-methylsulfanyl-L-aspartate(89)-[ribosomal protein uS12]-hydrogen + (sulfur carrier)-H + 5'-deoxyadenosine + L-methionine + A + S-adenosyl-L-homocysteine + 2 H(+). Its function is as follows. Catalyzes the methylthiolation of an aspartic acid residue of ribosomal protein uS12. In Flavobacterium johnsoniae (strain ATCC 17061 / DSM 2064 / JCM 8514 / BCRC 14874 / CCUG 350202 / NBRC 14942 / NCIMB 11054 / UW101) (Cytophaga johnsonae), this protein is Ribosomal protein uS12 methylthiotransferase RimO.